We begin with the raw amino-acid sequence, 504 residues long: Signal transduction histidine-protein kinase/phosphatase MprB (504 aa).

Topologically, residues 1–26 are cytoplasmic; the sequence is MWWFRRRDRAPLRATSSLSLRWRVML. A helical transmembrane segment spans residues 27–47; the sequence is LAMSMVAMVVVLMSFAVYAVI. The Extracellular portion of the chain corresponds to 48–163; the sequence is SAALYSDIDN…PTEAVMNKLR (116 aa). Residues 164–184 form a helical membrane-spanning segment; the sequence is WVLLIVGGIGVAVAAVAGGMV. Residues 185 to 504 lie on the Cytoplasmic side of the membrane; the sequence is TRAGLRPVGR…SVESQSTRAT (320 aa). Residues 186-238 enclose the HAMP domain; it reads RAGLRPVGRLTEAAERVARTDDLRPIPVFGSDELARLTEAFNLMLRALAESRE. A Histidine kinase domain is found at 246-466; the sequence is DAGHELRTPL…SIYVLLPGRR (221 aa). His249 is subject to Phosphohistidine; by autocatalysis. Positions 471-504 are disordered; sequence QLPGATAGARSTDIENSRGSANVISVESQSTRAT. The segment covering 487-504 has biased composition (polar residues); that stretch reads SRGSANVISVESQSTRAT.

The cofactor is Mg(2+). It depends on Mn(2+) as a cofactor. Post-translationally, autophosphorylated.

It is found in the cell membrane. The catalysed reaction is ATP + protein L-histidine = ADP + protein N-phospho-L-histidine.. Member of the two-component regulatory system MprB/MprA which contributes to maintaining a balance among several systems involved in stress resistance and is required for establishment and maintenance of persistent infection in the host. In response to environmental signals MprB acts both as a membrane-associated protein kinase that undergoes autophosphorylation and subsequently transfers the phosphate to MprA, and a protein phosphatase that dephosphorylates phospho-MprA. MprB/MprA up-regulates expression of mprA and pepD. This chain is Signal transduction histidine-protein kinase/phosphatase MprB (mprB), found in Mycobacterium bovis (strain ATCC BAA-935 / AF2122/97).